Consider the following 171-residue polypeptide: Protein FAM209A (171 aa).

An N-terminal signal peptide occupies residues 1–19 (MWTLKSSLVLLLCLTCSYA). The Extracellular portion of the chain corresponds to 20–52 (FMFSSLRQKTSEPQGKVQYGEHFRIRQNLPEHT). The helical transmembrane segment at 53–73 (QGWLGSKWLWLLFVVVPFVIL) threads the bilayer. Over 74-171 (QCQRDSEKNK…CEIWGEESSS (98 aa)) the chain is Cytoplasmic. The interval 81 to 107 (KNKEQSPPGLRGGQLHSPLKKKRNASP) is disordered. Residues 114–139 (NTLMELEVELMKFVSKVRNLKRAMAT) adopt a coiled-coil conformation.

The protein belongs to the FAM209 family. As to quaternary structure, interacts with DPY19L2. Interacts with CYLC1; the interaction may be relevant for proper acrosome attachment to the nuclear envelope.

The protein resides in the nucleus inner membrane. Functionally, may play a role in sperm acrosome biogenesis. The chain is Protein FAM209A from Homo sapiens (Human).